Here is a 228-residue protein sequence, read N- to C-terminus: Urease accessory protein UreF (228 aa).

Belongs to the UreF family. In terms of assembly, ureD, UreF and UreG form a complex that acts as a GTP-hydrolysis-dependent molecular chaperone, activating the urease apoprotein by helping to assemble the nickel containing metallocenter of UreC. The UreE protein probably delivers the nickel.

The protein localises to the cytoplasm. Required for maturation of urease via the functional incorporation of the urease nickel metallocenter. This is Urease accessory protein UreF from Prochlorococcus marinus (strain AS9601).